A 162-amino-acid chain; its full sequence is Large ribosomal subunit protein uL22c (162 aa).

Belongs to the universal ribosomal protein uL22 family. In terms of assembly, part of the 50S ribosomal subunit.

It localises to the plastid. The protein localises to the chloroplast. Functionally, this protein binds specifically to 23S rRNA. Its function is as follows. The globular domain of the protein is located near the polypeptide exit tunnel on the outside of the subunit, while an extended beta-hairpin is found that lines the wall of the exit tunnel in the center of the 70S ribosome. The polypeptide is Large ribosomal subunit protein uL22c (rpl22) (Cucumis sativus (Cucumber)).